An 87-amino-acid chain; its full sequence is U3-theraphotoxin-Hhn1a 10 (87 aa).

The first 24 residues, 1–24, serve as a signal peptide directing secretion; the sequence is MVNMEASMFLTFAGLVLLFVVCYA. Positions 25–52 are excised as a propeptide; the sequence is SESEEKEFPKEMLSSIFAVDNDFKQEER. Cystine bridges form between Cys-54-Cys-67, Cys-61-Cys-72, and Cys-66-Cys-79.

The protein belongs to the neurotoxin 10 (Hwtx-1) family. 51 (Hntx-8) subfamily. Hntx-8 sub-subfamily. Expressed by the venom gland.

It is found in the secreted. Functionally, ion channel inhibitor. This is U3-theraphotoxin-Hhn1a 10 from Cyriopagopus hainanus (Chinese bird spider).